The following is an 89-amino-acid chain: MTEKLNEIVVRKTKNVEDHVLDVIVLFNQGIDEVILKGTGREISKAVDVYNSLKDRLGDGVQLVNVQTGSEVRDRRRISYILLRLKRVY.

Lys12 is subject to N6-acetyllysine. Residues Lys14, Asp18, and Asp22 each contribute to the Zn(2+) site.

This sequence belongs to the histone-like Alba family. As to quaternary structure, forms homodimers and homotetramers. Homodimer at pH below 6.0. Forms homotetramers and higher order homooligomers at near the growth temperature of 80 degrees Celsius and pH 7.0. Interacts with Alba 1; heterodimers lack cooperative DNA-binding behavior and result in more compact chromatin structures compared to Alba 1 homodimers. Post-translationally, acetylated. Acetylation at Lys-12 decreases DNA-binding affinity.

It localises to the cytoplasm. It is found in the chromosome. Binds single-stranded DNA, RNA and double-stranded DNA. Involved in DNA compaction. This chain is DNA/RNA-binding protein Alba 2, found in Saccharolobus solfataricus (strain ATCC 35092 / DSM 1617 / JCM 11322 / P2) (Sulfolobus solfataricus).